A 233-amino-acid polypeptide reads, in one-letter code: Large ribosomal subunit protein uL1 (233 aa).

The protein belongs to the universal ribosomal protein uL1 family. As to quaternary structure, part of the 50S ribosomal subunit.

Its function is as follows. Binds directly to 23S rRNA. The L1 stalk is quite mobile in the ribosome, and is involved in E site tRNA release. Functionally, protein L1 is also a translational repressor protein, it controls the translation of the L11 operon by binding to its mRNA. The polypeptide is Large ribosomal subunit protein uL1 (Shewanella oneidensis (strain ATCC 700550 / JCM 31522 / CIP 106686 / LMG 19005 / NCIMB 14063 / MR-1)).